A 224-amino-acid chain; its full sequence is Phosphoribosylformylglycinamidine synthase subunit PurQ (224 aa).

In terms of domain architecture, Glutamine amidotransferase type-1 spans 3–224; that stretch reads FGVVVFPGSN…GLLEKVVALA (222 aa). The Nucleophile role is filled by C86. Catalysis depends on residues H195 and E197.

As to quaternary structure, part of the FGAM synthase complex composed of 1 PurL, 1 PurQ and 2 PurS subunits.

Its subcellular location is the cytoplasm. The catalysed reaction is N(2)-formyl-N(1)-(5-phospho-beta-D-ribosyl)glycinamide + L-glutamine + ATP + H2O = 2-formamido-N(1)-(5-O-phospho-beta-D-ribosyl)acetamidine + L-glutamate + ADP + phosphate + H(+). It carries out the reaction L-glutamine + H2O = L-glutamate + NH4(+). It functions in the pathway purine metabolism; IMP biosynthesis via de novo pathway; 5-amino-1-(5-phospho-D-ribosyl)imidazole from N(2)-formyl-N(1)-(5-phospho-D-ribosyl)glycinamide: step 1/2. In terms of biological role, part of the phosphoribosylformylglycinamidine synthase complex involved in the purines biosynthetic pathway. Catalyzes the ATP-dependent conversion of formylglycinamide ribonucleotide (FGAR) and glutamine to yield formylglycinamidine ribonucleotide (FGAM) and glutamate. The FGAM synthase complex is composed of three subunits. PurQ produces an ammonia molecule by converting glutamine to glutamate. PurL transfers the ammonia molecule to FGAR to form FGAM in an ATP-dependent manner. PurS interacts with PurQ and PurL and is thought to assist in the transfer of the ammonia molecule from PurQ to PurL. The protein is Phosphoribosylformylglycinamidine synthase subunit PurQ of Trichormus variabilis (strain ATCC 29413 / PCC 7937) (Anabaena variabilis).